We begin with the raw amino-acid sequence, 251 residues long: Ubiquinone/menaquinone biosynthesis C-methyltransferase UbiE (251 aa).

Residues T74, D95, 123-124 (NA), and S140 contribute to the S-adenosyl-L-methionine site.

The protein belongs to the class I-like SAM-binding methyltransferase superfamily. MenG/UbiE family.

It carries out the reaction a 2-demethylmenaquinol + S-adenosyl-L-methionine = a menaquinol + S-adenosyl-L-homocysteine + H(+). The catalysed reaction is a 2-methoxy-6-(all-trans-polyprenyl)benzene-1,4-diol + S-adenosyl-L-methionine = a 5-methoxy-2-methyl-3-(all-trans-polyprenyl)benzene-1,4-diol + S-adenosyl-L-homocysteine + H(+). Its pathway is quinol/quinone metabolism; menaquinone biosynthesis; menaquinol from 1,4-dihydroxy-2-naphthoate: step 2/2. It functions in the pathway cofactor biosynthesis; ubiquinone biosynthesis. Methyltransferase required for the conversion of demethylmenaquinol (DMKH2) to menaquinol (MKH2) and the conversion of 2-polyprenyl-6-methoxy-1,4-benzoquinol (DDMQH2) to 2-polyprenyl-3-methyl-6-methoxy-1,4-benzoquinol (DMQH2). The protein is Ubiquinone/menaquinone biosynthesis C-methyltransferase UbiE of Serratia proteamaculans (strain 568).